The primary structure comprises 291 residues: MNRIQQTFQTSSAPFWYAQLELGFCYENSRTIMSHRKHYGPVRVQKMLWPEKTGVCHAIIVHPPAGIAGGDHLTFQIETERQAHAVITTPGAGKWYRTNGKHAFQHIYLNVKDDSILEWMPQETMLFDGALAHSETDIHLEQTASFIGWDMLVLGRQARAENFVQGSYHNQFKLWRKNKLLVADTLYFEGGDRWLSSCLGMNNQAVMASFWAVPPEKFRSSFYLEQHIELIRELIMRMDVPVTLTLLEDVLCARFLGNDVRRCHDAFAAIRAKLRRYWFDLDEEFPRIWKT.

Belongs to the UreD family. UreD, UreF and UreG form a complex that acts as a GTP-hydrolysis-dependent molecular chaperone, activating the urease apoprotein by helping to assemble the nickel containing metallocenter of UreC. The UreE protein probably delivers the nickel.

It localises to the cytoplasm. Functionally, required for maturation of urease via the functional incorporation of the urease nickel metallocenter. This Acinetobacter baumannii (strain ACICU) protein is Urease accessory protein UreD.